Here is a 140-residue protein sequence, read N- to C-terminus: Arsenate reductase (140 aa).

The Nucleophile; cysteine thioarsenate intermediate role is filled by C11.

This sequence belongs to the ArsC family.

It catalyses the reaction [glutaredoxin]-dithiol + arsenate + glutathione + H(+) = glutathionyl-S-S-[glutaredoxin] + arsenite + H2O. Its function is as follows. Involved in resistance to arsenate. Catalyzes the reduction of arsenate [As(V)] to arsenite [As(III)]. The resulting arsenite is then extruded from the cell via the aquaglyceroporin AqpS. Does not display antimonate reductase activity. The sequence is that of Arsenate reductase from Rhizobium meliloti (strain 1021) (Ensifer meliloti).